Here is a 266-residue protein sequence, read N- to C-terminus: DNA repair protein RecO (266 aa).

This sequence belongs to the RecO family.

Involved in DNA repair and RecF pathway recombination. This chain is DNA repair protein RecO, found in Synechococcus elongatus (strain ATCC 33912 / PCC 7942 / FACHB-805) (Anacystis nidulans R2).